Here is a 396-residue protein sequence, read N- to C-terminus: 1-deoxy-D-xylulose 5-phosphate reductoisomerase (396 aa).

NADPH is bound by residues Thr15, Gly16, Ser17, Ile18, Gly41, and Asn129. Lys130 is a 1-deoxy-D-xylulose 5-phosphate binding site. Glu131 is a binding site for NADPH. Mn(2+) is bound at residue Asp155. The 1-deoxy-D-xylulose 5-phosphate site is built by Ser156, Glu157, Ser182, and His205. Position 157 (Glu157) interacts with Mn(2+). An NADPH-binding site is contributed by Gly211. 4 residues coordinate 1-deoxy-D-xylulose 5-phosphate: Ser218, Asn223, Lys224, and Glu227. Glu227 serves as a coordination point for Mn(2+).

It belongs to the DXR family. The cofactor is Mg(2+). It depends on Mn(2+) as a cofactor.

The enzyme catalyses 2-C-methyl-D-erythritol 4-phosphate + NADP(+) = 1-deoxy-D-xylulose 5-phosphate + NADPH + H(+). It participates in isoprenoid biosynthesis; isopentenyl diphosphate biosynthesis via DXP pathway; isopentenyl diphosphate from 1-deoxy-D-xylulose 5-phosphate: step 1/6. Its function is as follows. Catalyzes the NADPH-dependent rearrangement and reduction of 1-deoxy-D-xylulose-5-phosphate (DXP) to 2-C-methyl-D-erythritol 4-phosphate (MEP). This chain is 1-deoxy-D-xylulose 5-phosphate reductoisomerase, found in Xanthomonas axonopodis pv. citri (strain 306).